We begin with the raw amino-acid sequence, 345 residues long: D-erythrose-4-phosphate dehydrogenase (345 aa).

NAD(+) is bound at residue 11–12; it reads RI. Residues 158–160, arginine 204, 217–218, and arginine 240 each bind substrate; these read SCT and TK. Cysteine 159 acts as the Nucleophile in catalysis. Asparagine 322 contacts NAD(+).

This sequence belongs to the glyceraldehyde-3-phosphate dehydrogenase family. Epd subfamily. Homotetramer.

The protein localises to the cytoplasm. It catalyses the reaction D-erythrose 4-phosphate + NAD(+) + H2O = 4-phospho-D-erythronate + NADH + 2 H(+). It participates in cofactor biosynthesis; pyridoxine 5'-phosphate biosynthesis; pyridoxine 5'-phosphate from D-erythrose 4-phosphate: step 1/5. Catalyzes the NAD-dependent conversion of D-erythrose 4-phosphate to 4-phosphoerythronate. The protein is D-erythrose-4-phosphate dehydrogenase of Vibrio campbellii (strain ATCC BAA-1116).